A 381-amino-acid polypeptide reads, in one-letter code: Prostatic acid phosphatase (381 aa).

An N-terminal signal peptide occupies residues methionine 1–alanine 31. Arginine 42 contacts substrate. Residue histidine 43 is the Nucleophile of the active site. Position 46 (arginine 46) interacts with substrate. A glycan (N-linked (GlcNAc...) asparagine) is linked at asparagine 93. Arginine 110 contributes to the substrate binding site. 3 disulfide bridges follow: cysteine 160-cysteine 371, cysteine 214-cysteine 312, and cysteine 346-cysteine 350. Asparagine 219 carries an N-linked (GlcNAc...) asparagine glycan. Position 288 (histidine 288) interacts with substrate. The active-site Proton donor is aspartate 289. N-linked (GlcNAc...) asparagine glycosylation is present at asparagine 332.

The protein belongs to the histidine acid phosphatase family. In terms of assembly, homodimer; dimer formation is required for phosphatase activity. N-glycosylated. Expressed in prostate epithelium. Also expressed in the pelvic nerve and sacral spinal cord. Localizes in peptidergic and non-peptidergic nociceptive (pain-sensing) neurons.

The protein resides in the secreted. The protein localises to the cell membrane. It localises to the lysosome membrane. It catalyses the reaction a phosphate monoester + H2O = an alcohol + phosphate. The enzyme catalyses a ribonucleoside 5'-phosphate + H2O = a ribonucleoside + phosphate. It carries out the reaction 1-(9Z-octadecenoyl)-sn-glycero-3-phosphate + H2O = 1-(9Z-octadecenoyl)-sn-glycerol + phosphate. The catalysed reaction is O-phospho-L-tyrosyl-[protein] + H2O = L-tyrosyl-[protein] + phosphate. With respect to regulation, inhibited by L(+)-tartrate. Its function is as follows. A non-specific tyrosine phosphatase that dephosphorylates a diverse number of substrates under acidic conditions (pH 4-6) including alkyl, aryl, and acyl orthophosphate monoesters and phosphorylated proteins. Has lipid phosphatase activity and inactivates lysophosphatidic acid in seminal plasma. Functionally, in addition to its tyrosine phosphatase activity, also has ecto-5'-nucleotidase activity in dorsal root ganglion (DRG) neurons. Generates adenosine from AMP. This extracellular adenosine leads to a decrease in chronic pain by activating A1R in nociceptive neurons. This is Prostatic acid phosphatase (Acp3) from Rattus norvegicus (Rat).